The primary structure comprises 261 residues: Hydroxyethylthiazole kinase (261 aa).

Methionine 40 contacts substrate. ATP is bound by residues lysine 116 and threonine 162. Substrate is bound at residue glycine 189.

Belongs to the Thz kinase family. It depends on Mg(2+) as a cofactor.

It catalyses the reaction 5-(2-hydroxyethyl)-4-methylthiazole + ATP = 4-methyl-5-(2-phosphooxyethyl)-thiazole + ADP + H(+). It functions in the pathway cofactor biosynthesis; thiamine diphosphate biosynthesis; 4-methyl-5-(2-phosphoethyl)-thiazole from 5-(2-hydroxyethyl)-4-methylthiazole: step 1/1. Catalyzes the phosphorylation of the hydroxyl group of 4-methyl-5-beta-hydroxyethylthiazole (THZ). The protein is Hydroxyethylthiazole kinase of Methanosarcina mazei (strain ATCC BAA-159 / DSM 3647 / Goe1 / Go1 / JCM 11833 / OCM 88) (Methanosarcina frisia).